A 476-amino-acid chain; its full sequence is Inosine-5'-monophosphate dehydrogenase (476 aa).

CBS domains are found at residues 92 to 150 (MIEN…IADV) and 151 to 207 (MTKD…PNAS). Residues D244 and 294 to 296 (GVG) each bind NAD(+). K(+)-binding residues include G296 and G298. IMP is bound at residue S299. C301 is a binding site for K(+). C301 acts as the Thioimidate intermediate in catalysis. Residues 334–336 (DGG), 357–358 (GS), 381–385 (YRGMA), and E413 contribute to the IMP site. The K(+) site is built by E467 and S468.

Belongs to the IMPDH/GMPR family. As to quaternary structure, homotetramer. K(+) is required as a cofactor.

It catalyses the reaction IMP + NAD(+) + H2O = XMP + NADH + H(+). It functions in the pathway purine metabolism; XMP biosynthesis via de novo pathway; XMP from IMP: step 1/1. Mycophenolic acid (MPA) is a non-competitive inhibitor that prevents formation of the closed enzyme conformation by binding to the same site as the amobile flap. In contrast, mizoribine monophosphate (MZP) is a competitive inhibitor that induces the closed conformation. MPA is a potent inhibitor of mammalian IMPDHs but a poor inhibitor of the bacterial enzymes. MZP is a more potent inhibitor of bacterial IMPDH. In terms of biological role, catalyzes the conversion of inosine 5'-phosphate (IMP) to xanthosine 5'-phosphate (XMP), the first committed and rate-limiting step in the de novo synthesis of guanine nucleotides, and therefore plays an important role in the regulation of cell growth. This chain is Inosine-5'-monophosphate dehydrogenase, found in Nitrosopumilus maritimus (strain SCM1).